The primary structure comprises 37 residues: GILSLVKGVAKLAGKGLAKEGGKFGLELIACKIAKQC.

A disulfide bridge connects residues Cys31 and Cys37.

Belongs to the frog skin active peptide (FSAP) family. Esculentin subfamily. Expressed by the skin glands.

The protein resides in the secreted. In terms of biological role, shows antibacterial activity against representative Gram-negative and Gram-positive bacterial species, and hemolytic activity. The sequence is that of Esculentin-2A from Pelophylax lessonae (Pool frog).